Here is a 367-residue protein sequence, read N- to C-terminus: MTVGIVEEKSITFQTDLRLESGRILGPITIAYETYGILNADRSNAIMVTHAWTGSAHLAGRYCESEQKPGWWNEIVGPGKLLDTNRYFVICSNVIGSCFGSTGPASINPKTGKKYALTFPVITVRDMVRAQALLIDHLGIERLHAVMGGSMGGMQALEWATQFPDRIASAVILATTPRPSAQAISLNAVARWAIFNDPTWKKGEYRKNPRDGLALARGIGHITFLSDESMTAKFGRRFSAKDGQFDFFGQFEVERYLNYNGYNFVDRFDTNAFLYLAKALDLYDVAWGYESLEEAFAQVKAPMQFFAFSSDWLYPPPQTEEMVRMLKKLGKPVEYHLINSAYGHDAFLLEHETFTPMVRDFLKKAGA.

An AB hydrolase-1 domain is found at 44–350 (NAIMVTHAWT…AYGHDAFLLE (307 aa)). The active-site Nucleophile is the Ser-150. A substrate-binding site is contributed by Arg-217. Residues Asp-311 and His-344 contribute to the active site. Asp-345 is a binding site for substrate.

This sequence belongs to the AB hydrolase superfamily. MetX family. As to quaternary structure, homodimer.

The protein localises to the cytoplasm. The catalysed reaction is L-homoserine + acetyl-CoA = O-acetyl-L-homoserine + CoA. It participates in amino-acid biosynthesis; L-methionine biosynthesis via de novo pathway; O-acetyl-L-homoserine from L-homoserine: step 1/1. In terms of biological role, transfers an acetyl group from acetyl-CoA to L-homoserine, forming acetyl-L-homoserine. This chain is Homoserine O-acetyltransferase, found in Geotalea daltonii (strain DSM 22248 / JCM 15807 / FRC-32) (Geobacter daltonii).